Here is a 368-residue protein sequence, read N- to C-terminus: Glutamine synthetase root isozyme 2 (368 aa).

The region spanning 19–99 (IIAEYIWVGG…VMCDCYEPNG (81 aa)) is the GS beta-grasp domain. The interval 38–66 (RTLSGPVDDPSKLPKWNFDGSSTGQAPGD) is disordered. In terms of domain architecture, GS catalytic spans 106–368 (KRHGAAKIFS…NGDGKGAAAP (263 aa)).

The protein belongs to the glutamine synthetase family. Homooctamer. Found mainly in the vascular tissues of seedling roots.

Its subcellular location is the cytoplasm. The catalysed reaction is L-glutamate + NH4(+) + ATP = L-glutamine + ADP + phosphate + H(+). Its function is as follows. Plays a role in the flow of nitrogen into nitrogenous organic compounds. The protein is Glutamine synthetase root isozyme 2 (GLN2) of Zea mays (Maize).